Here is a 131-residue protein sequence, read N- to C-terminus: Cuticle protein 79, isoform B (131 aa).

3 consecutive repeat copies span residues 37–40 (AAPA), 45–48 (AAPA), and 53–56 (AAPA).

Its function is as follows. Component of the cuticle of migratory locust which contains more than 100 different structural proteins. The polypeptide is Cuticle protein 79, isoform B (Locusta migratoria (Migratory locust)).